The following is a 177-amino-acid chain: ATP-dependent protease subunit HslV (177 aa).

Thr-7 is a catalytic residue. The Na(+) site is built by Ala-162, Cys-165, and Thr-168.

Belongs to the peptidase T1B family. HslV subfamily. As to quaternary structure, a double ring-shaped homohexamer of HslV is capped on each side by a ring-shaped HslU homohexamer. The assembly of the HslU/HslV complex is dependent on binding of ATP.

It is found in the cytoplasm. The enzyme catalyses ATP-dependent cleavage of peptide bonds with broad specificity.. With respect to regulation, allosterically activated by HslU binding. In terms of biological role, protease subunit of a proteasome-like degradation complex believed to be a general protein degrading machinery. The sequence is that of ATP-dependent protease subunit HslV from Thioalkalivibrio sulfidiphilus (strain HL-EbGR7).